The chain runs to 601 residues: Arginine--tRNA ligase (601 aa).

A 'HIGH' region motif is present at residues Pro-133 to His-143.

This sequence belongs to the class-I aminoacyl-tRNA synthetase family. As to quaternary structure, monomer.

It localises to the cytoplasm. It carries out the reaction tRNA(Arg) + L-arginine + ATP = L-arginyl-tRNA(Arg) + AMP + diphosphate. This is Arginine--tRNA ligase from Flavobacterium psychrophilum (strain ATCC 49511 / DSM 21280 / CIP 103535 / JIP02/86).